Reading from the N-terminus, the 64-residue chain is Translation machinery-associated protein 7 homolog (64 aa).

The tract at residues 1 to 64 is disordered; that stretch reads MSGRQGGKAK…GGGIKKSGKK (64 aa). Positions 21–50 form a coiled coil; it reads DLSEEDVEFKKKQQEEAKKIKEMAAKAGQR. Positions 28-44 are enriched in basic and acidic residues; the sequence is EFKKKQQEEAKKIKEMA. The segment covering 53 to 64 has biased composition (gly residues); that stretch reads LLGGGIKKSGKK.

It belongs to the TMA7 family.

The sequence is that of Translation machinery-associated protein 7 homolog from Caenorhabditis briggsae.